Reading from the N-terminus, the 194-residue chain is Protein GrpE (194 aa).

The span at 1 to 24 (MEEKDKEEKVTGENLEPEDKNLEQ) shows a compositional bias: basic and acidic residues. Residues 1–41 (MEEKDKEEKVTGENLEPEDKNLEQEDKEEVVGPQEEQQIDE) form a disordered region.

It belongs to the GrpE family. As to quaternary structure, homodimer.

It localises to the cytoplasm. In terms of biological role, participates actively in the response to hyperosmotic and heat shock by preventing the aggregation of stress-denatured proteins, in association with DnaK and GrpE. It is the nucleotide exchange factor for DnaK and may function as a thermosensor. Unfolded proteins bind initially to DnaJ; upon interaction with the DnaJ-bound protein, DnaK hydrolyzes its bound ATP, resulting in the formation of a stable complex. GrpE releases ADP from DnaK; ATP binding to DnaK triggers the release of the substrate protein, thus completing the reaction cycle. Several rounds of ATP-dependent interactions between DnaJ, DnaK and GrpE are required for fully efficient folding. The chain is Protein GrpE from Carboxydothermus hydrogenoformans (strain ATCC BAA-161 / DSM 6008 / Z-2901).